Reading from the N-terminus, the 1041-residue chain is Sarcoplasmic/endoplasmic reticulum calcium ATPase 2 (1041 aa).

Residues 1-48 (MENAHTKTVEEVLAYFGVNESTGLSLEQVKKLKEKWGSNELPAEEGKT) are Cytoplasmic-facing. A helical membrane pass occupies residues 49–69 (LLELVIEQFEDLLVRILLLAA). At 70-89 (CISFVLAWFEEGEETITAFV) the chain is on the lumenal side. Residues 90-110 (EPFVILLILVANAIVGVWQER) traverse the membrane as a helical segment. Residues 111-253 (NAENAIEALK…QERTPLQQKL (143 aa)) lie on the Cytoplasmic side of the membrane. A helical membrane pass occupies residues 254–273 (DEFGEQLSKVISLICIAVWI). The Lumenal portion of the chain corresponds to 274-295 (INIGHFNDPVHGGSWIRGAIYY). Residues 296–313 (FKIAVALAVAAIPEGLPA) form a helical membrane-spanning segment. Residues Val-304, Ala-305, Ile-307, and Glu-309 each contribute to the Ca(2+) site. Over 314–756 (VITTCLALGT…EEGRAIYNNM (443 aa)) the chain is Cytoplasmic. The active-site 4-aspartylphosphate intermediate is the Asp-351. Residues Asp-351 and Thr-353 each contribute to the Mg(2+) site. ATP contacts are provided by Thr-353, Glu-442, Arg-489, Lys-514, Arg-559, Thr-624, Gly-625, Asp-626, Arg-677, and Lys-683. Asp-702 provides a ligand contact to Mg(2+). Asn-705 is a binding site for ATP. A helical transmembrane segment spans residues 757 to 776 (KQFIRYLISSNVGEVVCIFL). Ca(2+) contacts are provided by Asn-767 and Glu-770. Over 777–786 (TAALGFPEAL) the chain is Lumenal. The chain crosses the membrane as a helical span at residues 787–807 (IPVQLLWVNLVTDGLPATALG). The interaction with PLN stretch occupies residues 787–807 (IPVQLLWVNLVTDGLPATALG). Ca(2+) is bound by residues Asn-795, Thr-798, and Asp-799. At 808 to 827 (FNPPDLDIMNKPPRNPKEPL) the chain is on the cytoplasmic side. A helical transmembrane segment spans residues 828–850 (ISGWLFFRYLAIGCYVGAATVGA). At 851–896 (AAWWFIAADGGPRVTFYQLSHFLQCKEDNPDFSGVDCVVFESPYPM) the chain is on the lumenal side. Residues Cys-875 and Cys-887 are joined by a disulfide bond. Residues 897–916 (TMALSVLVTIEMCNALNSLS) form a helical membrane-spanning segment. Glu-907 lines the Ca(2+) pocket. The Cytoplasmic portion of the chain corresponds to 917–929 (ENQSLMRMPPWEN). Residues 930-948 (IWLVGAICLSMSLHFLILY) form a helical membrane-spanning segment. An interaction with PLN region spans residues 931–942 (WLVGAICLSMSL). At 949-963 (VEPLPIIFQITPLNV) the chain is on the lumenal side. The helical transmembrane segment at 964-984 (TQWLMVLKISLPVILLDETLK) threads the bilayer. The Cytoplasmic portion of the chain corresponds to 985-1041 (YVARNYLEPGKDSVQPATKPCSLSACTEGVSWPFVFITLPLVIWLYSTDTNFSDMFW).

This sequence belongs to the cation transport ATPase (P-type) (TC 3.A.3) family. Type IIA subfamily. Interacts with sarcolipin (SLN). Interacts with phospholamban (PLN). Interacts with myoregulin (MRLN). Interacts with DWORF. Interacts with TMX2. Mg(2+) serves as cofactor. As to expression, only isoform 2 is detected in heart, while both isoforms are expressed in brain, with isoform 2 being predominant.

Its subcellular location is the endoplasmic reticulum membrane. The protein localises to the sarcoplasmic reticulum membrane. The enzyme catalyses Ca(2+)(in) + ATP + H2O = Ca(2+)(out) + ADP + phosphate + H(+). Reversibly inhibited by phospholamban (PLN) at low calcium concentrations. Inhibited by sarcolipin (SLN) and myoregulin (MRLN). Enhanced by DWORF; DWORF increases activity by displacing sarcolipin (SLN), phospholamban (PLN) and myoregulin (MRLN). Its function is as follows. This magnesium-dependent enzyme catalyzes the hydrolysis of ATP coupled with the translocation of calcium from the cytosol to the sarcoplasmic reticulum lumen. Isoform SERCA2A is involved in the regulation of the contraction/relaxation cycle. May act as a regulator of TNFSF11-mediated Ca(2+) signaling during osteoclastogenesis. This Gallus gallus (Chicken) protein is Sarcoplasmic/endoplasmic reticulum calcium ATPase 2 (ATP2A2).